The sequence spans 466 residues: Sucrose-6-phosphate hydrolase (466 aa).

Substrate contacts are provided by residues 38–41 (LMND), Gln57, 100–101 (YS), 159–160 (RD), and Glu218. Residue Asp41 is part of the active site.

It belongs to the glycosyl hydrolase 32 family.

It localises to the cytoplasm. It carries out the reaction Hydrolysis of terminal non-reducing beta-D-fructofuranoside residues in beta-D-fructofuranosides.. The protein operates within glycan biosynthesis; sucrose metabolism. In terms of biological role, enables the bacterium to metabolize sucrose as a sole carbon source. The chain is Sucrose-6-phosphate hydrolase (scrB) from Salmonella typhimurium.